An 893-amino-acid chain; its full sequence is Translation initiation factor IF-2 (893 aa).

Disordered regions lie at residues 51–203 and 216–299; these read KEHG…AEAE and EENE…TSMQ. Composition is skewed to basic and acidic residues over residues 102–203, 216–238, and 245–261; these read ALEE…AEAE, EENEARWKEEEQKKSAAEKDADY, and HAREAEDAADRKEEQQP. A tr-type G domain is found at 392-561; sequence GRAPVVTIMG…LLQSEVLELT (170 aa). The G1 stretch occupies residues 401–408; the sequence is GHVDHGKT. 401–408 serves as a coordination point for GTP; that stretch reads GHVDHGKT. The G2 stretch occupies residues 426–430; it reads GITQH. A G3 region spans residues 447 to 450; it reads DTPG. Residues 447 to 451 and 501 to 504 contribute to the GTP site; these read DTPGH and NKID. Residues 501–504 are G4; that stretch reads NKID. The segment at 537 to 539 is G5; it reads SAK.

Belongs to the TRAFAC class translation factor GTPase superfamily. Classic translation factor GTPase family. IF-2 subfamily.

It is found in the cytoplasm. One of the essential components for the initiation of protein synthesis. Protects formylmethionyl-tRNA from spontaneous hydrolysis and promotes its binding to the 30S ribosomal subunits. Also involved in the hydrolysis of GTP during the formation of the 70S ribosomal complex. The chain is Translation initiation factor IF-2 from Aliivibrio fischeri (strain ATCC 700601 / ES114) (Vibrio fischeri).